The chain runs to 769 residues: Serine protease HtrA-like (769 aa).

The segment covering 1 to 20 (MDIGKKHVIPKSQYRRKRRE) has biased composition (basic residues). 2 disordered regions span residues 1 to 287 (MDIG…DKDN) and 324 to 390 (EDKH…KGRA). 2 stretches are compositionally biased toward basic and acidic residues: residues 21-64 (FFHN…ERFK) and 71-108 (LEQR…DVSK). Over residues 126–137 (YEQNSEATLSTK) the composition is skewed to polar residues. Positions 138-186 (STDKVESTEMRKLSSDKNKVGHEEQHVLSKPSEHDKETRIDSESSRTDS) are enriched in basic and acidic residues. Residues 247-262 (QQSQNEQTKTYTYGDS) are compositionally biased toward polar residues. Residues 264-287 (QNDKSNHENDLSHHTPSISDDKDN) are compositionally biased toward basic and acidic residues. The span at 331–347 (ADSSETVGYQSQSTASH) shows a compositional bias: polar residues. Residues 348 to 364 (RSTEKRNISINDHDKLN) are compositionally biased toward basic and acidic residues. Residues 365–390 (GQKTNTKTSANNNQKKATSKLNKGRA) are compositionally biased toward polar residues. A helical membrane pass occupies residues 410–430 (LVILMGIIILIVILNAIFNNV). Residues histidine 504, aspartate 534, and serine 619 each act as charge relay system in the active site. Residues 680 to 733 (IASLNSFERQAVKLPGKVKNGVVVDQVDNNGLADQSGLKKGDVITELDGKLLED) enclose the PDZ domain.

It belongs to the peptidase S1C family.

The protein resides in the cell membrane. This chain is Serine protease HtrA-like, found in Staphylococcus aureus (strain N315).